The chain runs to 190 residues: CDP-diacylglycerol--glycerol-3-phosphate 3-phosphatidyltransferase (190 aa).

Residues 6 to 17 (GVFNIPMYLTLF) are Cytoplasmic-facing. A helical membrane pass occupies residues 18–42 (RIIMVPCFVAVFYWPIYWSPMLCTL). Over 43-65 (IFFIAAITDWFDGFLARRWNQTS) the chain is Periplasmic. Residues 66 to 86 (RIGGFLDPIADKIMIITALIL) traverse the membrane as a helical segment. Residues 87-91 (ISEHF) are Cytoplasmic-facing. A helical membrane pass occupies residues 92–112 (HVWWMTLPISSIIIREILISS). At 113-150 (LRECIARVDNKNNISVIWLSKVKTFAQMLALIALLCRL) the chain is on the periplasmic side. Residues 151–173 (NEWTVIMGVISLYTAMLLTLWSM) traverse the membrane as a helical segment. Residues 174–186 (CYYVYSVSSILLQ) are Cytoplasmic-facing.

Belongs to the CDP-alcohol phosphatidyltransferase class-I family.

It localises to the cell inner membrane. The enzyme catalyses a CDP-1,2-diacyl-sn-glycerol + sn-glycerol 3-phosphate = a 1,2-diacyl-sn-glycero-3-phospho-(1'-sn-glycero-3'-phosphate) + CMP + H(+). It functions in the pathway phospholipid metabolism; phosphatidylglycerol biosynthesis; phosphatidylglycerol from CDP-diacylglycerol: step 1/2. Catalyzes the conversion of cytidine diphosphate diacylglycerol (CDP-DG) and glycerol 3-phosphate into phosphatidylglycerol. Essential for the synthesis of anionic phospholipids, thereby playing a role in balancing the ratio of zwitterionic and anionic phospholipids, which is thought to be important for normal membrane function. The polypeptide is CDP-diacylglycerol--glycerol-3-phosphate 3-phosphatidyltransferase (Blochmanniella floridana).